The sequence spans 257 residues: Adenylate kinase (257 aa).

52-57 (GAGKGT) is an ATP binding site. The NMP stretch occupies residues 72–101 (ATGDMLRSQVAKKTELGKEAKKIMDQGGLV). Residues T73, R78, 99-101 (GLV), 128-131 (GFPR), and Q135 each bind AMP. Residues 169 to 206 (GRLVHPASGRSYHKIFNPPKNEMLDDITGEPLIQRSDD) form an LID region. Residues R170 and 179-180 (SY) contribute to the ATP site. 2 residues coordinate AMP: R203 and R214. Residue Q242 participates in ATP binding.

This sequence belongs to the adenylate kinase family. AK2 subfamily. Monomer.

The protein localises to the cytoplasm. It is found in the cytosol. Its subcellular location is the mitochondrion intermembrane space. The catalysed reaction is AMP + ATP = 2 ADP. Functionally, catalyzes the reversible transfer of the terminal phosphate group between ATP and AMP. Plays an important role in cellular energy homeostasis and in adenine nucleotide metabolism. Adenylate kinase activity is critical for regulation of the phosphate utilization and the AMP de novo biosynthesis pathways. The chain is Adenylate kinase (adk1) from Aspergillus clavatus (strain ATCC 1007 / CBS 513.65 / DSM 816 / NCTC 3887 / NRRL 1 / QM 1276 / 107).